The sequence spans 243 residues: Segregation and condensation protein A (243 aa).

Belongs to the ScpA family. Component of a cohesin-like complex composed of ScpA, ScpB and the Smc homodimer, in which ScpA and ScpB bind to the head domain of Smc. The presence of the three proteins is required for the association of the complex with DNA.

It is found in the cytoplasm. In terms of biological role, participates in chromosomal partition during cell division. May act via the formation of a condensin-like complex containing Smc and ScpB that pull DNA away from mid-cell into both cell halves. The chain is Segregation and condensation protein A from Halothermothrix orenii (strain H 168 / OCM 544 / DSM 9562).